The primary structure comprises 274 residues: 4-diphosphocytidyl-2-C-methyl-D-erythritol kinase (274 aa).

Lys9 is an active-site residue. 91–101 (PAGAGLGGGSS) is a binding site for ATP. Asp133 is an active-site residue.

This sequence belongs to the GHMP kinase family. IspE subfamily.

It catalyses the reaction 4-CDP-2-C-methyl-D-erythritol + ATP = 4-CDP-2-C-methyl-D-erythritol 2-phosphate + ADP + H(+). It participates in isoprenoid biosynthesis; isopentenyl diphosphate biosynthesis via DXP pathway; isopentenyl diphosphate from 1-deoxy-D-xylulose 5-phosphate: step 3/6. Its function is as follows. Catalyzes the phosphorylation of the position 2 hydroxy group of 4-diphosphocytidyl-2C-methyl-D-erythritol. The sequence is that of 4-diphosphocytidyl-2-C-methyl-D-erythritol kinase from Persephonella marina (strain DSM 14350 / EX-H1).